A 282-amino-acid chain; its full sequence is NADPH-dependent 7-cyano-7-deazaguanine reductase (282 aa).

Substrate is bound at residue 82-84 (IES). 84-85 (SK) contributes to the NADPH binding site. C189 (thioimide intermediate) is an active-site residue. The Proton donor role is filled by D196. 228–229 (HE) is a substrate binding site. Residue 257–258 (RG) coordinates NADPH.

The protein belongs to the GTP cyclohydrolase I family. QueF type 2 subfamily. As to quaternary structure, homodimer.

It is found in the cytoplasm. The catalysed reaction is 7-aminomethyl-7-carbaguanine + 2 NADP(+) = 7-cyano-7-deazaguanine + 2 NADPH + 3 H(+). It functions in the pathway tRNA modification; tRNA-queuosine biosynthesis. Functionally, catalyzes the NADPH-dependent reduction of 7-cyano-7-deazaguanine (preQ0) to 7-aminomethyl-7-deazaguanine (preQ1). This Delftia acidovorans (strain DSM 14801 / SPH-1) protein is NADPH-dependent 7-cyano-7-deazaguanine reductase.